Here is a 427-residue protein sequence, read N- to C-terminus: Trigger factor (427 aa).

The 86-residue stretch at 163 to 248 (GDTVVIDFVG…VHEVKAKEVP (86 aa)) folds into the PPIase FKBP-type domain.

It belongs to the FKBP-type PPIase family. Tig subfamily.

It localises to the cytoplasm. It catalyses the reaction [protein]-peptidylproline (omega=180) = [protein]-peptidylproline (omega=0). Involved in protein export. Acts as a chaperone by maintaining the newly synthesized protein in an open conformation. Functions as a peptidyl-prolyl cis-trans isomerase. In Streptococcus equi subsp. equi (strain 4047), this protein is Trigger factor.